A 125-amino-acid polypeptide reads, in one-letter code: Fluoride-specific ion channel FluC (125 aa).

A run of 4 helical transmembrane segments spans residues 4–24 (IALVATGGAIGSVFRYLVGVW), 35–55 (WGTLAVNIVGSFLIGLLVELV), 68–88 (FLVTGVLGGFTTFSSFSLDAV), and 100–120 (AFYILASLVVSIAAVFAGLAL). The Na(+) site is built by G75 and T78.

This sequence belongs to the fluoride channel Fluc/FEX (TC 1.A.43) family.

It localises to the cell inner membrane. The enzyme catalyses fluoride(in) = fluoride(out). Its activity is regulated as follows. Na(+) is not transported, but it plays an essential structural role and its presence is essential for fluoride channel function. Functionally, fluoride-specific ion channel. Important for reducing fluoride concentration in the cell, thus reducing its toxicity. This chain is Fluoride-specific ion channel FluC, found in Agrobacterium fabrum (strain C58 / ATCC 33970) (Agrobacterium tumefaciens (strain C58)).